The following is a 142-amino-acid chain: Large ribosomal subunit protein uL13 (142 aa).

The protein belongs to the universal ribosomal protein uL13 family. In terms of assembly, part of the 50S ribosomal subunit.

In terms of biological role, this protein is one of the early assembly proteins of the 50S ribosomal subunit, although it is not seen to bind rRNA by itself. It is important during the early stages of 50S assembly. The polypeptide is Large ribosomal subunit protein uL13 (Pseudoalteromonas atlantica (strain T6c / ATCC BAA-1087)).